The sequence spans 635 residues: Extracellular metalloproteinase 9 (635 aa).

The N-terminal stretch at 1–19 (MHGLLLAAGLLTLPLRALA) is a signal peptide. A propeptide spanning residues 20–246 (HPGHQSTSIL…IHGVTDYVAD (227 aa)) is cleaved from the precursor. An N-linked (GlcNAc...) asparagine glycan is attached at Asn-274. Residues 279 to 307 (TWHSDGNTRYPTTRGNNGIAQDNPSGGTG) form a disordered region. Asn-413 carries an N-linked (GlcNAc...) asparagine glycan. His-430 serves as a coordination point for Zn(2+). Glu-431 is an active-site residue. His-434 is a Zn(2+) binding site. Asn-475 carries N-linked (GlcNAc...) asparagine glycosylation.

It belongs to the peptidase M36 family. It depends on Zn(2+) as a cofactor.

It localises to the secreted. In terms of biological role, secreted metalloproteinase that allows assimilation of proteinaceous substrates. This is Extracellular metalloproteinase 9 (MEP9) from Uncinocarpus reesii (strain UAMH 1704).